The primary structure comprises 251 residues: Pyrroloquinoline-quinone synthase (251 aa).

The protein belongs to the PqqC family.

The enzyme catalyses 6-(2-amino-2-carboxyethyl)-7,8-dioxo-1,2,3,4,7,8-hexahydroquinoline-2,4-dicarboxylate + 3 O2 = pyrroloquinoline quinone + 2 H2O2 + 2 H2O + H(+). Its pathway is cofactor biosynthesis; pyrroloquinoline quinone biosynthesis. In terms of biological role, ring cyclization and eight-electron oxidation of 3a-(2-amino-2-carboxyethyl)-4,5-dioxo-4,5,6,7,8,9-hexahydroquinoline-7,9-dicarboxylic-acid to PQQ. The sequence is that of Pyrroloquinoline-quinone synthase from Pseudomonas putida (strain ATCC 47054 / DSM 6125 / CFBP 8728 / NCIMB 11950 / KT2440).